Here is a 131-residue protein sequence, read N- to C-terminus: Sperm microtubule inner protein 11 (131 aa).

Positions 17–44 (SKKRDKTEETNQKDPVPTRLPPIFSEDG) are disordered.

In terms of assembly, microtubule inner protein component of sperm flagellar doublet microtubules. In terms of tissue distribution, expressed in sperm.

The protein resides in the cytoplasm. It is found in the cytoskeleton. The protein localises to the flagellum axoneme. In terms of biological role, microtubule inner protein (MIP) part of the dynein-decorated doublet microtubules (DMTs) in flagellum axoneme. May serve to reinforce and thus stabilize the microtubule structure in the sperm flagella. In Bos taurus (Bovine), this protein is Sperm microtubule inner protein 11 (SPMIP11).